Here is a 55-residue protein sequence, read N- to C-terminus: Large ribosomal subunit protein bL33 (55 aa).

It belongs to the bacterial ribosomal protein bL33 family.

This chain is Large ribosomal subunit protein bL33, found in Buchnera aphidicola subsp. Baizongia pistaciae (strain Bp).